The sequence spans 402 residues: NAD-dependent protein deacetylase sirtuin-7 (402 aa).

Disordered stretches follow at residues 1–25 and 59–78; these read MAAG…REEQ and VTEL…RQEE. The span at 9-25 shows a compositional bias: basic and acidic residues; it reads RSERKAAERVRRLREEQ. A Deacetylase sirtuin-type domain is found at 83-330; it reads PEELRRKVRE…RLLMDELGLE (248 aa). Residues 108 to 127 and 168 to 171 each bind NAD(+); these read GAGI…NGVW and QNCD. Catalysis depends on histidine 188, which acts as the Proton acceptor. Positions 196, 199, 226, and 229 each coordinate Zn(2+). NAD(+) contacts are provided by residues 269 to 271, 298 to 300, and cysteine 316; these read GSS and NLQ. Residues 355-385 form a disordered region; that stretch reads SHSRKSLCRSREEPPPGDQSAPLASATPILG. At arginine 390 the chain carries Asymmetric dimethylarginine; alternate. Arginine 390 is subject to Omega-N-methylarginine; alternate.

Belongs to the sirtuin family. Class IV subfamily. As to quaternary structure, interacts with UBTF and the RNA polymerase I complex. Interacts with components of the B-WICH complex, such as MYBBP1A, SMARCA5/SNF2H and BAZ1B/WSTF. Interacts with ELK4, leading to stabilization at target promoters for H3K18Ac deacetylation. Interacts with histone H2A and/or histone H2B. Interacts with DNMT1. Interacts with SIRT1. Zn(2+) serves as cofactor. Phosphorylated during mitosis. In terms of processing, methylation at Arg-390 by PRMT6 inhibits the H3K18Ac histone deacetylase activity, promoting mitochondria biogenesis and maintaining mitochondria respiration. Post-translationally, ubiquitinated via 'Lys-63'-linked ubiquitin chains. Deubiquitinated by USP7, inhibiting the H3K18Ac histone deacetylase activity and regulating gluconeogenesis. Ubiquitinated by E3 ubiquitin-protein ligase complex containing FBXO7; leading to proteasomal degradation.

The protein resides in the nucleus. The protein localises to the nucleolus. It is found in the nucleoplasm. Its subcellular location is the chromosome. It localises to the cytoplasm. The enzyme catalyses N(6)-acetyl-L-lysyl-[protein] + NAD(+) + H2O = 2''-O-acetyl-ADP-D-ribose + nicotinamide + L-lysyl-[protein]. It catalyses the reaction N(6)-glutaryl-L-lysyl-[protein] + NAD(+) + H2O = 2''-O-glutaryl-ADP-D-ribose + nicotinamide + L-lysyl-[protein]. The catalysed reaction is N(6)-succinyl-L-lysyl-[protein] + NAD(+) + H2O = 2''-O-succinyl-ADP-D-ribose + nicotinamide + L-lysyl-[protein]. It carries out the reaction N(6)-propanoyl-L-lysyl-[protein] + NAD(+) + H2O = 3''-O-propanoyl-ADP-D-ribose + nicotinamide + L-lysyl-[protein]. The enzyme catalyses N(6)-decanoyl-L-lysyl-[protein] + NAD(+) + H2O = 2''-O-decanoyl-ADP-D-ribose + nicotinamide + L-lysyl-[protein]. With respect to regulation, NAD-dependent protein-lysine deacetylase and deacylase activities are activated by nucleic acids. Histone deacetylase activity is activated by DNA. Protein-lysine deacylase activity is activated by RNA. H3K18Ac histone deacetylase activity is inhibited by methylation at Arg-390. H3K18Ac histone deacetylase activity is inhibited by deubiquitination by USP7. Its function is as follows. NAD-dependent protein-lysine deacylase that can act both as a deacetylase or deacylase (desuccinylase, depropionylase, deglutarylase and dedecanoylase), depending on the context. Specifically mediates deacetylation of histone H3 at 'Lys-18' (H3K18Ac). In contrast to other histone deacetylases, displays strong preference for a specific histone mark, H3K18Ac, directly linked to control of gene expression. H3K18Ac is mainly present around the transcription start site of genes and has been linked to activation of nuclear hormone receptors; SIRT7 thereby acts as a transcription repressor. Moreover, H3K18 hypoacetylation has been reported as a marker of malignancy in various cancers and seems to maintain the transformed phenotype of cancer cells. Also able to mediate deacetylation of histone H3 at 'Lys-36' (H3K36Ac) in the context of nucleosomes. Also mediates deacetylation of non-histone proteins, such as ATM, CDK9, DDX21, DDB1, FBL, FKBP5/FKBP51, GABPB1, RAN, RRP9/U3-55K and POLR1E/PAF53. Enriched in nucleolus where it stimulates transcription activity of the RNA polymerase I complex. Acts by mediating the deacetylation of the RNA polymerase I subunit POLR1E/PAF53, thereby promoting the association of RNA polymerase I with the rDNA promoter region and coding region. In response to metabolic stress, SIRT7 is released from nucleoli leading to hyperacetylation of POLR1E/PAF53 and decreased RNA polymerase I transcription. Required to restore the transcription of ribosomal RNA (rRNA) at the exit from mitosis. Promotes pre-ribosomal RNA (pre-rRNA) cleavage at the 5'-terminal processing site by mediating deacetylation of RRP9/U3-55K, a core subunit of the U3 snoRNP complex. Mediates 'Lys-37' deacetylation of Ran, thereby regulating the nuclear export of NF-kappa-B subunit RELA/p65. Acts as a regulator of DNA damage repair by mediating deacetylation of ATM during the late stages of DNA damage response, promoting ATM dephosphorylation and deactivation. Suppresses the activity of the DCX (DDB1-CUL4-X-box) E3 ubiquitin-protein ligase complexes by mediating deacetylation of DDB1, which prevents the interaction between DDB1 and CUL4 (CUL4A or CUL4B). Activates RNA polymerase II transcription by mediating deacetylation of CDK9, thereby promoting 'Ser-2' phosphorylation of the C-terminal domain (CTD) of RNA polymerase II. Deacetylates FBL, promoting histone-glutamine methyltransferase activity of FBL. Acts as a regulator of mitochondrial function by catalyzing deacetylation of GABPB1. Regulates Akt/AKT1 activity by mediating deacetylation of FKBP5/FKBP51. Required to prevent R-loop-associated DNA damage and transcription-associated genomic instability by mediating deacetylation and subsequent activation of DDX21, thereby overcoming R-loop-mediated stalling of RNA polymerases. In addition to protein deacetylase activity, also acts as a protein-lysine deacylase. Acts as a protein depropionylase by mediating depropionylation of Osterix (SP7), thereby regulating bone formation by osteoblasts. Acts as a histone deglutarylase by mediating deglutarylation of histone H4 on 'Lys-91' (H4K91glu); a mark that destabilizes nucleosomes by promoting dissociation of the H2A-H2B dimers from nucleosomes. Acts as a histone desuccinylase: in response to DNA damage, recruited to DNA double-strand breaks (DSBs) and catalyzes desuccinylation of histone H3 on 'Lys-122' (H3K122succ), thereby promoting chromatin condensation and DSB repair. Also promotes DSB repair by promoting H3K18Ac deacetylation, regulating non-homologous end joining (NHEJ). Along with its role in DNA repair, required for chromosome synapsis during prophase I of female meiosis by catalyzing H3K18Ac deacetylation. Involved in transcriptional repression of LINE-1 retrotransposon via H3K18Ac deacetylation, and promotes their association with the nuclear lamina. Required to stabilize ribosomal DNA (rDNA) heterochromatin and prevent cellular senescence induced by rDNA instability. Acts as a negative regulator of SIRT1 by preventing autodeacetylation of SIRT1, restricting SIRT1 deacetylase activity. In Rattus norvegicus (Rat), this protein is NAD-dependent protein deacetylase sirtuin-7.